The primary structure comprises 236 residues: Purine nucleoside phosphorylase DeoD-type (236 aa).

His5 is a binding site for a purine D-ribonucleoside. Phosphate-binding positions include Gly21, Arg25, Arg44, and 88-91; that span reads RIGS. Residues 180–182 and 204–205 contribute to the a purine D-ribonucleoside site; these read EME and SD. Asp205 functions as the Proton donor in the catalytic mechanism.

Belongs to the PNP/UDP phosphorylase family. As to quaternary structure, homohexamer; trimer of homodimers.

It carries out the reaction a purine D-ribonucleoside + phosphate = a purine nucleobase + alpha-D-ribose 1-phosphate. The catalysed reaction is a purine 2'-deoxy-D-ribonucleoside + phosphate = a purine nucleobase + 2-deoxy-alpha-D-ribose 1-phosphate. Catalyzes the reversible phosphorolytic breakdown of the N-glycosidic bond in the beta-(deoxy)ribonucleoside molecules, with the formation of the corresponding free purine bases and pentose-1-phosphate. This chain is Purine nucleoside phosphorylase DeoD-type, found in Chromobacterium violaceum (strain ATCC 12472 / DSM 30191 / JCM 1249 / CCUG 213 / NBRC 12614 / NCIMB 9131 / NCTC 9757 / MK).